The sequence spans 213 residues: Ribonuclease HII (213 aa).

The region spanning 20–209 is the RNase H type-2 domain; it reads ELVAGVDEVG…VRQAYEALEG (190 aa). Residues Asp26, Glu27, and Asp118 each contribute to the a divalent metal cation site.

It belongs to the RNase HII family. Mn(2+) is required as a cofactor. It depends on Mg(2+) as a cofactor.

The protein resides in the cytoplasm. It carries out the reaction Endonucleolytic cleavage to 5'-phosphomonoester.. Its function is as follows. Endonuclease that specifically degrades the RNA of RNA-DNA hybrids. This chain is Ribonuclease HII, found in Pseudomonas fluorescens (strain Pf0-1).